The primary structure comprises 451 residues: Arginine biosynthesis bifunctional protein ArgJ, mitochondrial (451 aa).

Residues Thr-180, Lys-209, Thr-220, Glu-307, Asn-446, and Thr-451 each coordinate substrate. The active-site Nucleophile is Thr-220.

The protein belongs to the ArgJ family. Heterodimer of an alpha and a beta chain. In terms of processing, the alpha and beta chains are autoproteolytically processed from a single precursor protein within the mitochondrion.

It is found in the mitochondrion matrix. The catalysed reaction is N(2)-acetyl-L-ornithine + L-glutamate = N-acetyl-L-glutamate + L-ornithine. The enzyme catalyses L-glutamate + acetyl-CoA = N-acetyl-L-glutamate + CoA + H(+). The protein operates within amino-acid biosynthesis; L-arginine biosynthesis; L-ornithine and N-acetyl-L-glutamate from L-glutamate and N(2)-acetyl-L-ornithine (cyclic): step 1/1. Its pathway is amino-acid biosynthesis; L-arginine biosynthesis; N(2)-acetyl-L-ornithine from L-glutamate: step 1/4. In terms of biological role, catalyzes two activities which are involved in the cyclic version of arginine biosynthesis: the synthesis of acetylglutamate from glutamate and acetyl-CoA, and of ornithine by transacetylation between acetylornithine and glutamate. In Fusarium vanettenii (strain ATCC MYA-4622 / CBS 123669 / FGSC 9596 / NRRL 45880 / 77-13-4) (Fusarium solani subsp. pisi), this protein is Arginine biosynthesis bifunctional protein ArgJ, mitochondrial.